Reading from the N-terminus, the 206-residue chain is MTPIQEQLIALGGVFQAAVLVDRIAKTGQVSEAALSCMLGSLLVVDPKDTLDVYGGDDLNLHEGYRAMASALERDPATLQREPLRYALSMLGLERQLAKRDDLLEIIGRRIPVIQSQVEHFGIAHENVIAATGALYEDTLSTLRQRIQVQGDMRNLQQPNNASKIRAILLAGIRSARLWRQVDGHRWQLVFSRRKLLKELYPLLHG.

This sequence belongs to the HflD family.

The protein localises to the cytoplasm. Its subcellular location is the cell inner membrane. This chain is High frequency lysogenization protein HflD homolog, found in Pseudomonas savastanoi pv. phaseolicola (strain 1448A / Race 6) (Pseudomonas syringae pv. phaseolicola (strain 1448A / Race 6)).